The primary structure comprises 460 residues: UDP-N-acetylmuramoylalanine--D-glutamate ligase (460 aa).

120–126 contributes to the ATP binding site; that stretch reads GSNGKTT.

The protein belongs to the MurCDEF family.

It localises to the cytoplasm. The enzyme catalyses UDP-N-acetyl-alpha-D-muramoyl-L-alanine + D-glutamate + ATP = UDP-N-acetyl-alpha-D-muramoyl-L-alanyl-D-glutamate + ADP + phosphate + H(+). Its pathway is cell wall biogenesis; peptidoglycan biosynthesis. Functionally, cell wall formation. Catalyzes the addition of glutamate to the nucleotide precursor UDP-N-acetylmuramoyl-L-alanine (UMA). The chain is UDP-N-acetylmuramoylalanine--D-glutamate ligase from Lactobacillus johnsonii (strain CNCM I-12250 / La1 / NCC 533).